A 400-amino-acid polypeptide reads, in one-letter code: Enoyl-[acyl-carrier-protein] reductase [NADH] 2 (400 aa).

NAD(+)-binding positions include 48-53 (GASSGF), 75-76 (FE), 112-113 (DA), and 141-142 (LA). Tyrosine 228 lines the substrate pocket. The active-site Proton donor is the tyrosine 238. Residues lysine 247 and 276 to 278 (LVT) each bind NAD(+).

The protein belongs to the TER reductase family. In terms of assembly, monomer.

The enzyme catalyses a 2,3-saturated acyl-[ACP] + NAD(+) = a (2E)-enoyl-[ACP] + NADH + H(+). Its pathway is lipid metabolism; fatty acid biosynthesis. Involved in the final reduction of the elongation cycle of fatty acid synthesis (FAS II). Catalyzes the reduction of a carbon-carbon double bond in an enoyl moiety that is covalently linked to an acyl carrier protein (ACP). The chain is Enoyl-[acyl-carrier-protein] reductase [NADH] 2 from Vibrio vulnificus (strain CMCP6).